A 240-amino-acid chain; its full sequence is Probable transcriptional regulator ycf27 (240 aa).

In terms of domain architecture, Response regulatory spans 5–118; sequence KILVIDDEAS…ELEARIRSVL (114 aa). D54 carries the post-translational modification 4-aspartylphosphate. The segment at residues 74 to 92 is a DNA-binding region (H-T-H motif); that stretch reads DVPIIMLTALSDVSDRITG. Positions 133–234 form a DNA-binding region, ompR/PhoB-type; it reads SGIINIGFLK…ARGTGYLFQR (102 aa).

It is found in the plastid. The protein localises to the chloroplast. Probable promoter-specific protein mediating the interaction between DNA and RNA polymerase. This chain is Probable transcriptional regulator ycf27 (ycf27), found in Porphyridium aerugineum (Red microalga).